The sequence spans 162 residues: Probable tRNA (guanine(10)-N2)-dimethyltransferase (162 aa).

The protein belongs to the methyltransferase superfamily. Trm-G10 family. As to quaternary structure, monomer.

The protein resides in the cytoplasm. It carries out the reaction guanosine(10) in tRNA + 2 S-adenosyl-L-methionine = N(2)-dimethylguanosine(10) in tRNA + 2 S-adenosyl-L-homocysteine + 2 H(+). Its function is as follows. Catalyzes the adenosylmethionine-dependent methylation of the exocyclic amino group (N(2)) of guanosine at position 10 of various tRNAs. Acts via a two-step process that leads to the formation of either N(2)-monomethyl (m(2)G) or N(2)-dimethylguanosine (m(2)(2)G). The chain is Probable tRNA (guanine(10)-N2)-dimethyltransferase (trmG10) from Methanothermococcus thermolithotrophicus (Methanococcus thermolithotrophicus).